The sequence spans 328 residues: uncharacterized protein (328 aa).

In terms of domain architecture, SIS spans 37–179; the sequence is LTERLLCHQG…AMTVLRCRKI (143 aa). 52–57 is a binding site for ATP; the sequence is GIGKSG. CBS domains are found at residues 205 to 264 and 273 to 328; these read LSPR…GGAI and MTRK…AGLL.

Belongs to the SIS family. GutQ/KpsF subfamily.

This is an uncharacterized protein from Chlamydia muridarum (strain MoPn / Nigg).